The following is a 425-amino-acid chain: Serine--tRNA ligase (425 aa).

An L-serine-binding site is contributed by Thr-232–Glu-234. ATP-binding positions include Arg-263–Glu-265 and Val-279. L-serine is bound at residue Glu-286. Position 350 to 353 (Glu-350 to Ser-353) interacts with ATP. Thr-387 provides a ligand contact to L-serine.

Belongs to the class-II aminoacyl-tRNA synthetase family. Type-1 seryl-tRNA synthetase subfamily. Homodimer. The tRNA molecule binds across the dimer.

The protein resides in the cytoplasm. The catalysed reaction is tRNA(Ser) + L-serine + ATP = L-seryl-tRNA(Ser) + AMP + diphosphate + H(+). It catalyses the reaction tRNA(Sec) + L-serine + ATP = L-seryl-tRNA(Sec) + AMP + diphosphate + H(+). It functions in the pathway aminoacyl-tRNA biosynthesis; selenocysteinyl-tRNA(Sec) biosynthesis; L-seryl-tRNA(Sec) from L-serine and tRNA(Sec): step 1/1. Functionally, catalyzes the attachment of serine to tRNA(Ser). Is also able to aminoacylate tRNA(Sec) with serine, to form the misacylated tRNA L-seryl-tRNA(Sec), which will be further converted into selenocysteinyl-tRNA(Sec). The polypeptide is Serine--tRNA ligase (Methanoregula boonei (strain DSM 21154 / JCM 14090 / 6A8)).